We begin with the raw amino-acid sequence, 195 residues long: Pyridoxal 5'-phosphate synthase subunit PdxT (195 aa).

53-55 is a binding site for L-glutamine; that stretch reads GES. Catalysis depends on cysteine 82, which acts as the Nucleophile. Residues arginine 108 and 134–135 each bind L-glutamine; that span reads IR. Residues histidine 173 and glutamate 175 each act as charge relay system in the active site.

The protein belongs to the glutaminase PdxT/SNO family. As to quaternary structure, in the presence of PdxS, forms a dodecamer of heterodimers. Only shows activity in the heterodimer.

It carries out the reaction aldehydo-D-ribose 5-phosphate + D-glyceraldehyde 3-phosphate + L-glutamine = pyridoxal 5'-phosphate + L-glutamate + phosphate + 3 H2O + H(+). The catalysed reaction is L-glutamine + H2O = L-glutamate + NH4(+). It participates in cofactor biosynthesis; pyridoxal 5'-phosphate biosynthesis. Functionally, catalyzes the hydrolysis of glutamine to glutamate and ammonia as part of the biosynthesis of pyridoxal 5'-phosphate. The resulting ammonia molecule is channeled to the active site of PdxS. In Methanobrevibacter smithii (strain ATCC 35061 / DSM 861 / OCM 144 / PS), this protein is Pyridoxal 5'-phosphate synthase subunit PdxT.